Here is a 114-residue protein sequence, read N- to C-terminus: Cytochrome c oxidase subunit 4B (114 aa).

The next 3 helical transmembrane spans lie at 29 to 49 (QIVVFALMIFLTLMSFMAVAT), 56 to 76 (FAIPFIFILAVIQFALQLFFF), and 89 to 109 (AFMISGIFITVPTIAALMLLL).

Belongs to the cytochrome c oxidase bacterial subunit 4 family.

The protein localises to the cell membrane. It catalyses the reaction 4 Fe(II)-[cytochrome c] + O2 + 8 H(+)(in) = 4 Fe(III)-[cytochrome c] + 2 H2O + 4 H(+)(out). The polypeptide is Cytochrome c oxidase subunit 4B (ctaF) (Alkalihalophilus pseudofirmus (strain ATCC BAA-2126 / JCM 17055 / OF4) (Bacillus pseudofirmus)).